The sequence spans 242 residues: Small ribosomal subunit protein uS2 (242 aa).

The protein belongs to the universal ribosomal protein uS2 family.

The sequence is that of Small ribosomal subunit protein uS2 from Vibrio parahaemolyticus serotype O3:K6 (strain RIMD 2210633).